A 165-amino-acid polypeptide reads, in one-letter code: Shikimate kinase (165 aa).

Residue Gly-11–Thr-16 participates in ATP binding. Thr-15 provides a ligand contact to Mg(2+). Residues Asp-33, Arg-57, and Gly-78 each contribute to the substrate site. Arg-116 is a binding site for ATP. Arg-134 is a binding site for substrate.

It belongs to the shikimate kinase family. In terms of assembly, monomer. Mg(2+) serves as cofactor.

It localises to the cytoplasm. The enzyme catalyses shikimate + ATP = 3-phosphoshikimate + ADP + H(+). It functions in the pathway metabolic intermediate biosynthesis; chorismate biosynthesis; chorismate from D-erythrose 4-phosphate and phosphoenolpyruvate: step 5/7. Its function is as follows. Catalyzes the specific phosphorylation of the 3-hydroxyl group of shikimic acid using ATP as a cosubstrate. The chain is Shikimate kinase from Bacillus cytotoxicus (strain DSM 22905 / CIP 110041 / 391-98 / NVH 391-98).